The sequence spans 445 residues: NAD-specific glutamate dehydrogenase (445 aa).

Residue Lys-124 is part of the active site. 235–241 contacts NAD(+); it reads GFGNVAW.

Belongs to the Glu/Leu/Phe/Val dehydrogenases family. Homohexamer.

It catalyses the reaction L-glutamate + NAD(+) + H2O = 2-oxoglutarate + NH4(+) + NADH + H(+). The chain is NAD-specific glutamate dehydrogenase (gdhB) from Bacteroides fragilis (strain YCH46).